Consider the following 135-residue polypeptide: MQSSSPSQNHSTQVPIKVTHRQVKKRAIRRRRVDLVCGCSYYLHINCFNHGFTHRGSHHCSSSNEWRVYLGNKQSPVFHNHQAPTTTIPAEPGHHNSPGSIQSQPEEGAGDSQMFSQLPDLDNLTASDWSFLKGL.

A Nuclear localization signal motif is present at residues 17–32; sequence KVTHRQVKKRAIRRRR. A zinc finger spans residues 37–54; the sequence is CGCSYYLHINCFNHGFTH. Polar residues predominate over residues 77-88; it reads VFHNHQAPTTTI. The interval 77–117 is disordered; it reads VFHNHQAPTTTIPAEPGHHNSPGSIQSQPEEGAGDSQMFSQ. Positions 120-135 are transactivation; that stretch reads DLDNLTASDWSFLKGL.

It belongs to the geminiviridae transcriptional activator protein family. As to quaternary structure, monomer. Homodimer. Homooligomer. Self-interaction correlates with nuclear localization and efficient activation of transcription. Monomers suppress local silencing by interacting with and inactivating host adenosine kinase 2 (ADK2) in the cytoplasm. Interacts with and inhibits host SNF1 kinase. Binds to ssDNA. Post-translationally, phosphorylated.

Its subcellular location is the host nucleus. It localises to the host cytoplasm. Its function is as follows. Strong activator of the late viral genes promoters. Enhances the expression of the capsid protein and nuclear shuttle protein. Acts as a suppressor of RNA-mediated gene silencing, also known as post-transcriptional gene silencing (PTGS), a mechanism of plant viral defense that limits the accumulation of viral RNAs. Suppresses the host RNA silencing by inhibiting adenosine kinase 2 (ADK2), a kinase involved in a general methylation pathway. Also suppresses the host basal defense by interacting with and inhibiting SNF1 kinase, a key regulator of cell metabolism implicated in innate antiviral defense. Determines pathogenicity. The chain is Transcriptional activator protein from Hewittia sublobata (Coralbush).